Here is a 324-residue protein sequence, read N- to C-terminus: Fructose-1,6-bisphosphatase class 1 (324 aa).

4 residues coordinate Mg(2+): E88, D107, L109, and D110. Substrate-binding positions include 110–113 (DGSS), N199, and K265. E271 lines the Mg(2+) pocket.

The protein belongs to the FBPase class 1 family. In terms of assembly, homotetramer. It depends on Mg(2+) as a cofactor.

The protein resides in the cytoplasm. The catalysed reaction is beta-D-fructose 1,6-bisphosphate + H2O = beta-D-fructose 6-phosphate + phosphate. Its pathway is carbohydrate biosynthesis; gluconeogenesis. This chain is Fructose-1,6-bisphosphatase class 1, found in Neisseria meningitidis serogroup C (strain 053442).